The chain runs to 217 residues: Peptide methionine sulfoxide reductase MsrA (217 aa).

Residue Cys56 is part of the active site.

This sequence belongs to the MsrA Met sulfoxide reductase family.

The enzyme catalyses L-methionyl-[protein] + [thioredoxin]-disulfide + H2O = L-methionyl-(S)-S-oxide-[protein] + [thioredoxin]-dithiol. It catalyses the reaction [thioredoxin]-disulfide + L-methionine + H2O = L-methionine (S)-S-oxide + [thioredoxin]-dithiol. Has an important function as a repair enzyme for proteins that have been inactivated by oxidation. Catalyzes the reversible oxidation-reduction of methionine sulfoxide in proteins to methionine. The sequence is that of Peptide methionine sulfoxide reductase MsrA from Corynebacterium glutamicum (strain ATCC 13032 / DSM 20300 / JCM 1318 / BCRC 11384 / CCUG 27702 / LMG 3730 / NBRC 12168 / NCIMB 10025 / NRRL B-2784 / 534).